A 325-amino-acid polypeptide reads, in one-letter code: UPF0285 protein Mbar_A0208 (325 aa).

It belongs to the UPF0285 family.

The protein is UPF0285 protein Mbar_A0208 of Methanosarcina barkeri (strain Fusaro / DSM 804).